Here is a 176-residue protein sequence, read N- to C-terminus: Glycine-rich RNA-binding protein 7 (176 aa).

Alanine 2 is subject to N-acetylalanine. A required for RNA chaperone activity region spans residues alanine 2–asparagine 41. The RRM domain maps to tyrosine 8–serine 86. ADP-ribosylarginine; by HopU1 is present on arginine 49. Residues glutamate 83–tyrosine 103 are disordered. The span at glycine 88–tyrosine 103 shows a compositional bias: gly residues. The tract at residues glycine 88–glycine 175 is glycine-rich (GR) required for cell-to-cell movement. A nuclear targeting sequence (M9) region spans residues glycine 97–tyrosine 148. A phosphoserine mark is found at serine 105 and serine 117. The segment at tyrosine 131–tryptophan 176 is disordered.

Belongs to the GR-RBP family. Interacts with TRN1. Interacts with the Pseudomonas syringae type III effector HopU1. Binds to small phloem-mobile single-stranded RNAs (ss-sRNA, e.g. small interfering RNA (siRNA) and microRNA (miRNA)) in the phloeme exudate, including viral-derived sRNA (vsiRNA). ADP-ribosylated by the Pseudomonas syringae type III effector HopU1. ADP-ribosylation reduces the ability of the protein to bind RNA. In terms of tissue distribution, ubiquitous with strong expression in guard cell.

The protein localises to the cytoplasm. Its subcellular location is the nucleus. The protein resides in the secreted. In terms of biological role, plays a role in RNA transcription or processing during stress. Binds RNAs and DNAs sequence with a preference to single-stranded nucleic acids. Displays strong affinity to poly(U) and poly(G) sequence. Involved in mRNA alternative splicing of numerous targets by modulating splice site selection. Negatively regulates the circadian oscillations of its own transcript as well as RBG8 transcript. Forms an interlocked post-transcriptional negative feedback loop with the RBG8 autoregulatory circuit. Both proteins negatively autoregulate and reciprocally crossregulate by binding to their pre-mRNAs and promoting unproductive splicing coupled to degradation via the NMD pathway. Involved in the regulation of abscisic acid and stress responses. Affects the growth and stress tolerance under high salt and dehydration stress conditions, and also confers freezing tolerance, particularly via the regulation of stomatal opening and closing in the guard cells. Exhibits RNA chaperone activity during the cold adaptation process. Involved in the export of mRNAs from the nucleus to the cytoplasm under cold stress conditions. Target of the Pseudomonas syringae type III effector HopU1, which could probably be involved in plant innate immunity. Component of the flowering autonomous pathway which promotes floral transition, at least partly by down-regulating FLC. Mediates cell-to-cell trafficking of RNA interference (RNAi) signals (small RNAs (sRNA), e.g. small interfering RNA (siRNA) and microRNA (miRNA)) which regulate growth and development, as well as responses to environmental inputs, including pathogen attack; can compromise zucchini yellow mosaic virus (ZYMV) and tobacco rattle virus (TRV) infections at the early stage. The protein is Glycine-rich RNA-binding protein 7 of Arabidopsis thaliana (Mouse-ear cress).